The chain runs to 739 residues: Catalase-peroxidase (739 aa).

Residues 1 to 23 (MLKKIVTALGMSGMLLAANSAIA) form the signal peptide. Positions 100–221 (WHDAGTYRLA…YAATQMGLIY (122 aa)) form a cross-link, tryptophyl-tyrosyl-methioninium (Trp-Tyr) (with M-247). The active-site Proton acceptor is His-101. Residues 221–247 (YVNPEGPDGKPDIKGAASEIRQAFRAM) constitute a cross-link (tryptophyl-tyrosyl-methioninium (Tyr-Met) (with W-100)). His-262 is a binding site for heme b.

This sequence belongs to the peroxidase family. Peroxidase/catalase subfamily. In terms of assembly, homodimer or homotetramer. It depends on heme b as a cofactor. In terms of processing, formation of the three residue Trp-Tyr-Met cross-link is important for the catalase, but not the peroxidase activity of the enzyme.

It catalyses the reaction H2O2 + AH2 = A + 2 H2O. The enzyme catalyses 2 H2O2 = O2 + 2 H2O. Bifunctional enzyme with both catalase and broad-spectrum peroxidase activity. The polypeptide is Catalase-peroxidase (Francisella philomiragia subsp. philomiragia (strain ATCC 25017 / CCUG 19701 / FSC 153 / O#319-036)).